We begin with the raw amino-acid sequence, 906 residues long: Aconitate hydratase A (906 aa).

A propeptide spanning residues 1–2 is cleaved from the precursor; it reads MS. 3 residues coordinate [4Fe-4S] cluster: Cys-441, Cys-507, and Cys-510.

This sequence belongs to the aconitase/IPM isomerase family. Monomer. [4Fe-4S] cluster is required as a cofactor.

It carries out the reaction citrate = D-threo-isocitrate. The catalysed reaction is (2S,3R)-3-hydroxybutane-1,2,3-tricarboxylate = 2-methyl-cis-aconitate + H2O. It functions in the pathway carbohydrate metabolism; tricarboxylic acid cycle; isocitrate from oxaloacetate: step 2/2. The protein operates within organic acid metabolism; propanoate degradation. In terms of biological role, involved in the catabolism of short chain fatty acids (SCFA) via the tricarboxylic acid (TCA)(acetyl degradation route) and probably the 2-methylcitrate cycle I (propionate degradation route). Catalyzes the reversible isomerization of citrate to isocitrate via cis-aconitate. Could catalyze the hydration of 2-methyl-cis-aconitate to yield (2R,3S)-2-methylisocitrate. The apo form of AcnA functions as a RNA-binding regulatory protein. In Deinococcus radiodurans (strain ATCC 13939 / DSM 20539 / JCM 16871 / CCUG 27074 / LMG 4051 / NBRC 15346 / NCIMB 9279 / VKM B-1422 / R1), this protein is Aconitate hydratase A (acn).